Here is a 349-residue protein sequence, read N- to C-terminus: METNFSIPLNETEEVLPEPAGHTVLWIFSLLVHGVTFIFGVLGNGLVIWVAGFRMTRTVNTICYLNLALADFSFSAILPFHMVSVAMREKWPFGTFLCKLVHVMIDINLFVSVYLITIIALDRCICVLHPAWAQNHRTMSLAKRVMTGLWILTIVLTLPNFIFWTTISTTNGDTYCIFNYPFWGDTVVERMNVFITMAKVSLILHFIIGFSIPMSIITVCYGIIVAKIHKKRMTKSSRPLHIFTAVVASFFICWFPYELTGILMAVWLKEILLNGKYKIILVLINPTSSLAFFNSCLNPSLYVFMGHNFQERLIRSLPTSLERALTEVPDSAQTSNTHTTSASPPEETE.

Topologically, residues 1–27 are extracellular; the sequence is METNFSIPLNETEEVLPEPAGHTVLWI. N-linked (GlcNAc...) asparagine glycosylation is found at N4 and N10. A helical membrane pass occupies residues 28 to 50; the sequence is FSLLVHGVTFIFGVLGNGLVIWV. Residues 51–61 lie on the Cytoplasmic side of the membrane; it reads AGFRMTRTVNT. The chain crosses the membrane as a helical span at residues 62–83; the sequence is ICYLNLALADFSFSAILPFHMV. Over 84–100 the chain is Extracellular; the sequence is SVAMREKWPFGTFLCKL. C98 and C176 form a disulfide bridge. Residues 101-121 traverse the membrane as a helical segment; that stretch reads VHVMIDINLFVSVYLITIIAL. Topologically, residues 122 to 140 are cytoplasmic; sequence DRCICVLHPAWAQNHRTMS. The chain crosses the membrane as a helical span at residues 141 to 162; it reads LAKRVMTGLWILTIVLTLPNFI. At 163-205 the chain is on the extracellular side; that stretch reads FWTTISTTNGDTYCIFNYPFWGDTVVERMNVFITMAKVSLILH. The chain crosses the membrane as a helical span at residues 206–226; that stretch reads FIIGFSIPMSIITVCYGIIVA. The Cytoplasmic segment spans residues 227–242; it reads KIHKKRMTKSSRPLHI. A helical transmembrane segment spans residues 243–266; the sequence is FTAVVASFFICWFPYELTGILMAV. The Extracellular segment spans residues 267 to 286; that stretch reads WLKEILLNGKYKIILVLINP. Residues 287-306 traverse the membrane as a helical segment; the sequence is TSSLAFFNSCLNPSLYVFMG. Topologically, residues 307 to 349 are cytoplasmic; it reads HNFQERLIRSLPTSLERALTEVPDSAQTSNTHTTSASPPEETE. Residues 327–349 are disordered; the sequence is EVPDSAQTSNTHTTSASPPEETE. Over residues 331–343 the composition is skewed to polar residues; that stretch reads SAQTSNTHTTSAS.

This sequence belongs to the G-protein coupled receptor 1 family.

The protein localises to the cell membrane. Functionally, low affinity receptor for N-formyl-methionyl peptides, which are powerful neutrophils chemotactic factors. Binding of FMLP to the receptor causes activation of neutrophils. This response is mediated via a G-protein that activates a phosphatidylinositol-calcium second messenger system. This is N-formyl peptide receptor 3 (FPR3) from Macaca mulatta (Rhesus macaque).